We begin with the raw amino-acid sequence, 261 residues long: Imidazole glycerol phosphate synthase subunit HisF (261 aa).

Catalysis depends on residues aspartate 12 and aspartate 131.

It belongs to the HisA/HisF family. Heterodimer of HisH and HisF.

It localises to the cytoplasm. It catalyses the reaction 5-[(5-phospho-1-deoxy-D-ribulos-1-ylimino)methylamino]-1-(5-phospho-beta-D-ribosyl)imidazole-4-carboxamide + L-glutamine = D-erythro-1-(imidazol-4-yl)glycerol 3-phosphate + 5-amino-1-(5-phospho-beta-D-ribosyl)imidazole-4-carboxamide + L-glutamate + H(+). It functions in the pathway amino-acid biosynthesis; L-histidine biosynthesis; L-histidine from 5-phospho-alpha-D-ribose 1-diphosphate: step 5/9. IGPS catalyzes the conversion of PRFAR and glutamine to IGP, AICAR and glutamate. The HisF subunit catalyzes the cyclization activity that produces IGP and AICAR from PRFAR using the ammonia provided by the HisH subunit. This chain is Imidazole glycerol phosphate synthase subunit HisF, found in Brucella abortus (strain S19).